A 57-amino-acid chain; its full sequence is Large ribosomal subunit protein bL32c (57 aa).

Belongs to the bacterial ribosomal protein bL32 family.

The protein resides in the plastid. Its subcellular location is the chloroplast. The polypeptide is Large ribosomal subunit protein bL32c (Liriodendron tulipifera (Tuliptree)).